Consider the following 141-residue polypeptide: HTH-type transcriptional repressor NsrR (141 aa).

In terms of domain architecture, HTH rrf2-type spans 2–129 (QLTSFTDYAL…DDCTIEELLS (128 aa)). Residues 28–51 (ITEVTDLFGVSRNHMVKVINRLGQ) constitute a DNA-binding region (H-T-H motif). C91, C96, and C102 together coordinate [2Fe-2S] cluster.

[2Fe-2S] cluster is required as a cofactor.

Functionally, nitric oxide-sensitive repressor of genes involved in protecting the cell against nitrosative stress. May require iron for activity. This chain is HTH-type transcriptional repressor NsrR, found in Vibrio campbellii (strain ATCC BAA-1116).